The primary structure comprises 176 residues: Negative modulator of initiation of replication (176 aa).

It belongs to the SeqA family. In terms of assembly, homodimer. Polymerizes to form helical filaments.

It is found in the cytoplasm. Its function is as follows. Negative regulator of replication initiation, which contributes to regulation of DNA replication and ensures that replication initiation occurs exactly once per chromosome per cell cycle. Binds to pairs of hemimethylated GATC sequences in the oriC region, thus preventing assembly of replication proteins and re-initiation at newly replicated origins. Repression is relieved when the region becomes fully methylated. This Hamiltonella defensa subsp. Acyrthosiphon pisum (strain 5AT) protein is Negative modulator of initiation of replication.